A 183-amino-acid chain; its full sequence is Dual-action ribosomal maturation protein DarP (183 aa).

A disordered region spans residues 1 to 21 (MKQKPEDWLNDVPDNQEDDED).

It belongs to the DarP family.

The protein localises to the cytoplasm. Its function is as follows. Member of a network of 50S ribosomal subunit biogenesis factors which assembles along the 30S-50S interface, preventing incorrect 23S rRNA structures from forming. Promotes peptidyl transferase center (PTC) maturation. The chain is Dual-action ribosomal maturation protein DarP from Pectobacterium atrosepticum (strain SCRI 1043 / ATCC BAA-672) (Erwinia carotovora subsp. atroseptica).